The primary structure comprises 225 residues: Large ribosomal subunit protein uL1 (225 aa).

The protein belongs to the universal ribosomal protein uL1 family. Part of the 50S ribosomal subunit.

In terms of biological role, binds directly to 23S rRNA. The L1 stalk is quite mobile in the ribosome, and is involved in E site tRNA release. Functionally, protein L1 is also a translational repressor protein, it controls the translation of the L11 operon by binding to its mRNA. The polypeptide is Large ribosomal subunit protein uL1 (Rhodopirellula baltica (strain DSM 10527 / NCIMB 13988 / SH1)).